Here is a 201-residue protein sequence, read N- to C-terminus: ATP-dependent Clp protease proteolytic subunit (201 aa).

S100 acts as the Nucleophile in catalysis. Residue H125 is part of the active site.

The protein belongs to the peptidase S14 family. Component of the chloroplastic Clp protease core complex.

It is found in the plastid. The protein localises to the chloroplast stroma. It catalyses the reaction Hydrolysis of proteins to small peptides in the presence of ATP and magnesium. alpha-casein is the usual test substrate. In the absence of ATP, only oligopeptides shorter than five residues are hydrolyzed (such as succinyl-Leu-Tyr-|-NHMec, and Leu-Tyr-Leu-|-Tyr-Trp, in which cleavage of the -Tyr-|-Leu- and -Tyr-|-Trp bonds also occurs).. Cleaves peptides in various proteins in a process that requires ATP hydrolysis. Has a chymotrypsin-like activity. Plays a major role in the degradation of misfolded proteins. This Ranunculus macranthus (Large buttercup) protein is ATP-dependent Clp protease proteolytic subunit.